The chain runs to 258 residues: L-rhamnose-1-dehydrogenase (258 aa).

Positions 19, 68, and 95 each coordinate NADP(+). Residues Ser147 and Tyr161 each act as proton donor in the active site. Positions 161, 165, 194, and 196 each coordinate NADP(+). Lys165 (lowers pKa of active site Tyr) is an active-site residue.

The protein belongs to the short-chain dehydrogenases/reductases (SDR) family.

It carries out the reaction L-rhamnofuranose + NAD(+) = L-rhamnono-1,4-lactone + NADH + H(+). NAD-dependent dehydrogenase that has high activity with L-rhamnose and L-lyxose, and shows only low activity with L-mannose. Has no activity with NADP. Catalyzes the first step in an alternative pathway for rhamnose utilization that does not involve phosphorylated intermediates. The sequence is that of L-rhamnose-1-dehydrogenase (DHG2) from Scheffersomyces stipitis (strain ATCC 58785 / CBS 6054 / NBRC 10063 / NRRL Y-11545) (Yeast).